We begin with the raw amino-acid sequence, 208 residues long: ATP phosphoribosyltransferase (208 aa).

It belongs to the ATP phosphoribosyltransferase family. Short subfamily. In terms of assembly, heteromultimer composed of HisG and HisZ subunits.

The protein resides in the cytoplasm. The catalysed reaction is 1-(5-phospho-beta-D-ribosyl)-ATP + diphosphate = 5-phospho-alpha-D-ribose 1-diphosphate + ATP. It functions in the pathway amino-acid biosynthesis; L-histidine biosynthesis; L-histidine from 5-phospho-alpha-D-ribose 1-diphosphate: step 1/9. Catalyzes the condensation of ATP and 5-phosphoribose 1-diphosphate to form N'-(5'-phosphoribosyl)-ATP (PR-ATP). Has a crucial role in the pathway because the rate of histidine biosynthesis seems to be controlled primarily by regulation of HisG enzymatic activity. The polypeptide is ATP phosphoribosyltransferase (Lactococcus lactis subsp. cremoris (strain MG1363)).